We begin with the raw amino-acid sequence, 652 residues long: Nitrate reductase-like protein NarX (652 aa).

A nitrate reductase alpha subunit region spans residues 1–251; that stretch reads MTVTPRTGSR…FGDQTDVPES (251 aa). The 65-residue stretch at 53-117 folds into the 4Fe-4S Mo/W bis-MGD-type domain; the sequence is DKVVRSTHGV…AFSWYTYSPT (65 aa). Histidine 60, cysteine 64, cysteine 68, and cysteine 103 together coordinate [4Fe-4S] cluster. Aspartate 233 serves as a coordination point for Mo-bis(molybdopterin guanine dinucleotide). The interval 258-415 is nitrate reductase delta subunit; it reads VWQCASVLLT…TVAAVCRTGD (158 aa). 5 consecutive transmembrane segments (helical) span residues 416–436, 466–486, 504–524, 545–565, and 595–615; these read MMGE…VAVG, PMFH…LVIP, AVVL…LLIY, LVLV…SGVV, and APLY…LWPF. A nitrate reductase gamma subunit region spans residues 416 to 652; that stretch reads MMGELFWTVV…VLTRPRRRGW (237 aa). Heme b-binding residues include histidine 469 and histidine 479. 2 residues coordinate heme b: histidine 602 and histidine 620.

It in the N-terminal section; belongs to the nitrate reductase alpha subunit family. The protein in the central section; belongs to the NarJ/NarW family. In the C-terminal section; belongs to the nitrate reductase gamma subunit family. The cofactor is [4Fe-4S] cluster. Mo-bis(molybdopterin guanine dinucleotide) serves as cofactor. Requires heme b as cofactor.

Its subcellular location is the cell membrane. Its function is as follows. Does not seem to have nitrate reductase activity. The sequence is that of Nitrate reductase-like protein NarX (narX) from Mycobacterium tuberculosis (strain CDC 1551 / Oshkosh).